The primary structure comprises 111 residues: Aquaporin-2 (111 aa).

The Cytoplasmic segment spans residues 1–6; the sequence is SIAFSR. Residues 7-27 form a helical membrane-spanning segment; that stretch reads AVFSEFLATLLFVFFGLGSAL. The Extracellular segment spans residues 28–37; that stretch reads NWPSTVPIPT. Residues 38–56 traverse the membrane as a helical segment; the sequence is VLQISMAFGLAIGTLVQTL. Residues 57 to 61 are Cytoplasmic-facing; that stretch reads GHISG. Positions 62 to 71 form an intramembrane region, discontinuously helical; that stretch reads AHINPAVTVA. Positions 65-67 match the NPA 1 motif; sequence NPA. The Cytoplasmic segment spans residues 72–82; the sequence is CLVGCHVSFLR. The helical transmembrane segment at 83-104 threads the bilayer; it reads ATFYVAAQLLGAVAGAALLHKL. The Extracellular portion of the chain corresponds to 105 to 111; the sequence is TPEDIRG.

Belongs to the MIP/aquaporin (TC 1.A.8) family. As to quaternary structure, homotetramer. In terms of processing, serine phosphorylation is necessary and sufficient for expression at the apical membrane. Endocytosis is not phosphorylation-dependent. N-glycosylated.

The protein resides in the apical cell membrane. It is found in the basolateral cell membrane. The protein localises to the cell membrane. It localises to the cytoplasmic vesicle membrane. Its subcellular location is the golgi apparatus. The protein resides in the trans-Golgi network membrane. It carries out the reaction H2O(in) = H2O(out). The catalysed reaction is glycerol(in) = glycerol(out). Its function is as follows. Forms a water-specific channel that provides the plasma membranes of renal collecting duct with high permeability to water, thereby permitting water to move in the direction of an osmotic gradient. Plays an essential role in renal water homeostasis. Could also be permeable to glycerol. This chain is Aquaporin-2, found in Macroscelides proboscideus (Short-eared elephant shrew).